Reading from the N-terminus, the 432-residue chain is Ribosome biogenesis protein WDR12 homolog (432 aa).

The interval 13–97 (LQIRLVALNK…ESVIEVVYFQ (85 aa)) is ubiquitin-like (UBL) domain. WD repeat units follow at residues 109–146 (LHSDWIKSVRSKDDCILAGSLDGTARIWNMAGEEYAIF), 148–190 (GHES…KSVE), 197–236 (GHTQAVNAVTVNQSKTKICSVSSDKMIKIWSTDCSRKDDD), 265–303 (GHTDGIDAVVWPKEAEIITAGWDHRIKIWDTEVGVNKSD), 305–345 (NVNK…DQTV), 352–392 (SHKN…APLY), and 396–432 (GHEDKVLAVDWSEPQYIVSGGADNRIQIYQREVAQRS).

Belongs to the WD repeat WDR12/YTM1 family.

Its subcellular location is the nucleus. The protein localises to the nucleolus. The protein resides in the nucleoplasm. Its function is as follows. Required for maturation of ribosomal RNAs and formation of the large ribosomal subunit. The chain is Ribosome biogenesis protein WDR12 homolog from Trichoplax adhaerens (Trichoplax reptans).